Reading from the N-terminus, the 39-residue chain is Photosystem II reaction center protein L (39 aa).

A helical transmembrane segment spans residues 18–38 (SLYLGLLLIAVLGILFSSYFF).

The protein belongs to the PsbL family. As to quaternary structure, PSII is composed of 1 copy each of membrane proteins PsbA, PsbB, PsbC, PsbD, PsbE, PsbF, PsbH, PsbI, PsbJ, PsbK, PsbL, PsbM, PsbT, PsbX, PsbY, PsbZ, Psb30/Ycf12, peripheral proteins PsbO, CyanoQ (PsbQ), PsbU, PsbV and a large number of cofactors. It forms dimeric complexes.

Its subcellular location is the cellular thylakoid membrane. Its function is as follows. One of the components of the core complex of photosystem II (PSII). PSII is a light-driven water:plastoquinone oxidoreductase that uses light energy to abstract electrons from H(2)O, generating O(2) and a proton gradient subsequently used for ATP formation. It consists of a core antenna complex that captures photons, and an electron transfer chain that converts photonic excitation into a charge separation. This subunit is found at the monomer-monomer interface and is required for correct PSII assembly and/or dimerization. This chain is Photosystem II reaction center protein L, found in Picosynechococcus sp. (strain ATCC 27264 / PCC 7002 / PR-6) (Agmenellum quadruplicatum).